The primary structure comprises 210 residues: uncharacterized protein (210 aa).

The protein localises to the mitochondrion. This is an uncharacterized protein from Schizosaccharomyces pombe (strain 972 / ATCC 24843) (Fission yeast).